Reading from the N-terminus, the 1563-residue chain is Integrator complex subunit 5-like protein (1563 aa).

Composition is skewed to basic and acidic residues over residues 1-21 (MKEEETIEISEKEKDKERNDN) and 31-44 (EDWRNEETATKNEN). Disordered stretches follow at residues 1 to 63 (MKEE…YDDD), 102 to 208 (KKSK…NITY), and 270 to 310 (NSLN…QQNP). Over residues 52-63 (GDSDDDDYYDDD) the composition is skewed to acidic residues. Low complexity-rich tracts occupy residues 109-133 (TAATTTTTTTTTTTTTTTTTPTATA) and 141-202 (NNLL…NNNN). The chain crosses the membrane as a helical span at residues 350-370 (DSIINWSLSTLTIITRLLIIL). The segment covering 381 to 398 (QQQQQQQQQQQQQQQQQQ) has biased composition (low complexity). Disordered regions lie at residues 381–417 (QQQQQQQQQQQQQQQQQQTKNKTQFPPPPPPPLRQPI), 466–498 (SKSSSSSSSSSSSSSSSSSSSSSSSSSSSSSKT), 637–694 (FDNN…DNSS), and 784–828 (ILNN…SQEI). A compositionally biased stretch (pro residues) spans 405–414 (FPPPPPPPLR). Composition is skewed to low complexity over residues 468 to 496 (SSSSSSSSSSSSSSSSSSSSSSSSSSSSS), 639 to 686 (NNNN…NNNN), and 786 to 824 (NNNNNNNNNNNNNNNNNNNNNNNNNNNNNNNNNQQQQQQ). The chain crosses the membrane as a helical span at residues 877–897 (IIIKLISLIGMDSIYSSLIIL). Disordered regions lie at residues 1154-1173 (SGNFGNGDDDDDEYGDDEYG) and 1268-1303 (KQRMKKKKQSIQQNGNINNEQQQEEDDNDDADDQNE). A compositionally biased stretch (acidic residues) spans 1160-1172 (GDDDDDEYGDDEY). Over residues 1277 to 1288 (SIQQNGNINNEQ) the composition is skewed to low complexity. Acidic residues predominate over residues 1289–1303 (QQEEDDNDDADDQNE).

The protein belongs to the Integrator subunit 5 family. Component of the Integrator complex. The core complex associates with protein phosphatase 2A subunits, to form the Integrator-PP2A (INTAC) complex.

It localises to the nucleus. The protein resides in the cytoplasm. It is found in the nucleus membrane. Its function is as follows. Component of the integrator complex, a multiprotein complex that terminates RNA polymerase II (Pol II) transcription in the promoter-proximal region of genes. The integrator complex provides a quality checkpoint during transcription elongation by driving premature transcription termination of transcripts that are unfavorably configured for transcriptional elongation: the complex terminates transcription by (1) catalyzing dephosphorylation of the C-terminal domain (CTD) of Pol II subunit polr2a, (2) degrading the exiting nascent RNA transcript via endonuclease activity and (3) promoting the release of Pol II from bound DNA. The integrator complex is also involved in terminating the synthesis of non-coding Pol II transcripts, such as enhancer RNAs (eRNAs), small nuclear RNAs (snRNAs), telomerase RNAs and long non-coding RNAs (lncRNAs). In Dictyostelium discoideum (Social amoeba), this protein is Integrator complex subunit 5-like protein.